A 653-amino-acid chain; its full sequence is Serine/threonine-protein phosphatase with EF-hands 1 (653 aa).

Residues serine 16–phenylalanine 45 form the IQ domain. Residues isoleucine 121 to lysine 455 form a catalytic region. Mn(2+)-binding residues include aspartate 172, histidine 174, aspartate 201, and asparagine 233. Histidine 234 acts as the Proton donor in catalysis. Mn(2+)-binding residues include histidine 285 and histidine 403. 3 EF-hand domains span residues serine 483–leucine 518, arginine 566–histidine 601, and isoleucine 606–tyrosine 641. Aspartate 579, aspartate 581, serine 583, glutamate 590, aspartate 619, asparagine 621, aspartate 623, serine 625, and glutamate 630 together coordinate Ca(2+).

Belongs to the PPP phosphatase family. Mn(2+) is required as a cofactor. It depends on Mg(2+) as a cofactor. In terms of tissue distribution, detected in retina and retinal derived Y-79 retinoblastoma cells. Also found in fetal brain.

The catalysed reaction is O-phospho-L-seryl-[protein] + H2O = L-seryl-[protein] + phosphate. The enzyme catalyses O-phospho-L-threonyl-[protein] + H2O = L-threonyl-[protein] + phosphate. With respect to regulation, activated by calcium. May have a role in the recovery or adaptation response of photoreceptors. May have a role in development. The polypeptide is Serine/threonine-protein phosphatase with EF-hands 1 (PPEF1) (Homo sapiens (Human)).